The primary structure comprises 599 residues: Purine-uracil permease NCS1 (599 aa).

12 consecutive transmembrane segments (helical) span residues 140-160 (LWIGLVVGVPTYYLAGSLVDL), 164-184 (WWQGIATVVTANLILLVPLVL), 218-238 (LVGCGWYGIETWIGGEAIFLL), 257-277 (TSPLEFSCFIVFWLAQLCIVW), 293-313 (ILISLTSCLLAWSYLKAGGFG), 327-347 (FWTLFFPSLTANISFWATLAL), 363-383 (IIGQVGLPVFMGLFTFVGVAV), 411-433 (TLLAIVGISLATLTTNIAANVVA), 445-465 (FFTFGRGAFLTAVLGIVFQPW), 474-494 (FVYTWLIGYSALLGPIGGIIL), 525-545 (YNVAAVVALVAGIIPVVPGFL), and 560-580 (VVYDNALFFSFIIAGFVYWII).

Belongs to the purine-cytosine permease (2.A.39) family. As to expression, expressed in roots, leaves, stems, flowers, siliques and seeds.

The protein localises to the plastid. It is found in the chloroplast envelope. Its subcellular location is the chloroplast membrane. In terms of biological role, nucleobase-proton symporter that facilitates the uptake of nucleobases in the cells. Can transport adenine, guanine and uracil. Contributes to uracil import into plastids for plastidic uracil salvage which is essential for plant growth and development. This Arabidopsis thaliana (Mouse-ear cress) protein is Purine-uracil permease NCS1.